We begin with the raw amino-acid sequence, 176 residues long: Peptide deformylase (176 aa).

Fe cation-binding residues include Cys-95 and His-137. The active site involves Glu-138. His-141 lines the Fe cation pocket.

Belongs to the polypeptide deformylase family. It depends on Fe(2+) as a cofactor.

The catalysed reaction is N-terminal N-formyl-L-methionyl-[peptide] + H2O = N-terminal L-methionyl-[peptide] + formate. Removes the formyl group from the N-terminal Met of newly synthesized proteins. Requires at least a dipeptide for an efficient rate of reaction. N-terminal L-methionine is a prerequisite for activity but the enzyme has broad specificity at other positions. The polypeptide is Peptide deformylase (Hyphomonas neptunium (strain ATCC 15444)).